A 227-amino-acid chain; its full sequence is A-type potassium channel modulatory protein KCNIP1 (227 aa).

Residues 38-94 (LEMTMVCHRPEGLEQLEAQTNFTKRELQVLYRGFKNECPSGVVNEETFKQIYAQFFP) enclose the EF-hand 1; degenerate domain. EF-hand domains follow at residues 97 to 132 (DAST…LLRG), 133 to 168 (TVHE…IYDM), and 181 to 216 (TPRQ…DDNI). D146, N148, D150, Y152, E157, D194, N196, D198, and E205 together coordinate Ca(2+). Residues 214–227 (DNIMRSLQLFQNVM) are interaction with KCND2.

It belongs to the recoverin family. In terms of assembly, component of heteromultimeric potassium channels. Identified in potassium channel complexes containing KCND1, KCND2, KCND3, KCNIP1, KCNIP2, KCNIP3, KCNIP4, DPP6 and DPP10. Part of a heterooctamer composed of the tetrameric channel and four KCNIP1 chains. Probably part of a complex consisting of KCNIP1, KCNIP2 isoform 3 and KCND2. Self-associates to form homodimers and homotetramers. Interacts with KCNIP2 isoform 3 in a calcium-dependent manner. Interacts with KCND2; this interaction mediates the capture of both the N- and C-terminus of KCND2, thus preventing KCND2 N-type inactivation and modulates the channel gating kinetics. Interacts with KCND3; each KCNIP1 monomer interacts with two adjacent KCND3 subunits, through both the N-terminal inactivation ball of a KCND3 subunit and a C-terminal helix from the adjacent KCND3 subunit, clamping them together; this interaction stabilizes the tetrameric form and modulates the channel gating kinetics namely channel activation and inactivation kinetics and rate of recovery from inactivation. Detected in hippocampus and in the molecular layer of the dentate gyrus (at protein level). Isoform 1 and isoform 2 are predominantly expressed at equal levels in brain. Colocalizes with KCND3 in inhibitory interneurons in cortex and hippocampus and in striatal interneurons.

It localises to the cell membrane. It is found in the cytoplasm. The protein resides in the cell projection. The protein localises to the dendrite. Functionally, regulatory subunit of Kv4/D (Shal)-type voltage-gated rapidly inactivating A-type potassium channels. Regulates channel density, inactivation kinetics and rate of recovery from inactivation in a calcium-dependent and isoform-specific manner. Modulates KCND2/Kv4.2 currents. In vitro, modulates KCND1/Kv4.1 currents. Increases the presence of KCND2 at the cell surface. This Rattus norvegicus (Rat) protein is A-type potassium channel modulatory protein KCNIP1.